We begin with the raw amino-acid sequence, 385 residues long: V-type proton ATPase subunit C (385 aa).

Belongs to the V-ATPase C subunit family. As to quaternary structure, V-ATPase is a heteromultimeric enzyme made up of two complexes: the ATP-hydrolytic V1 complex and the proton translocation V0 complex. The V1 complex consists of three catalytic AB heterodimers that form a heterohexamer, three peripheral stalks each consisting of EG heterodimers, one central rotor including subunits D and F, and the regulatory subunits C and H. The proton translocation complex V0 consists of the proton transport subunit a, a ring of proteolipid subunits c9c'', rotary subunit d, subunits e and f, and the accessory subunits VhaAC45 and ATP6AP2.

Subunit of the V1 complex of vacuolar(H+)-ATPase (V-ATPase), a multisubunit enzyme composed of a peripheral complex (V1) that hydrolyzes ATP and a membrane integral complex (V0) that translocates protons. V-ATPase is responsible for acidifying and maintaining the pH of intracellular compartments and in some cell types, is targeted to the plasma membrane, where it is responsible for acidifying the extracellular environment. Subunit C is necessary for the assembly of the catalytic sector of the enzyme and is likely to have a specific function in its catalytic activity. The sequence is that of V-type proton ATPase subunit C from Manduca sexta (Tobacco hawkmoth).